We begin with the raw amino-acid sequence, 386 residues long: Endonuclease III homolog 2, chloroplastic (386 aa).

A chloroplast-targeting transit peptide spans 1-50 (MILTGAASTFPIVARVLNAMNRRMYAATTLSSAKSISAESLNLRSDSNSE). Residues 44 to 66 (RSDSNSEAAHGASESETRVSLRK) are disordered. Residues 252–278 (YDGDIPRTLEELLSLPGVGPKIAHLVL) enclose the HhH domain. The active-site Nucleophile; for N-glycosylase activity is Lys272. Residues Cys347, Cys354, Cys357, and Cys363 each coordinate [4Fe-4S] cluster.

It belongs to the Nth/MutY family. Requires [4Fe-4S] cluster as cofactor.

It is found in the plastid. Its subcellular location is the chloroplast stroma. The protein resides in the chloroplast nucleoid. It carries out the reaction 2'-deoxyribonucleotide-(2'-deoxyribose 5'-phosphate)-2'-deoxyribonucleotide-DNA = a 3'-end 2'-deoxyribonucleotide-(2,3-dehydro-2,3-deoxyribose 5'-phosphate)-DNA + a 5'-end 5'-phospho-2'-deoxyribonucleoside-DNA + H(+). Bifunctional DNA N-glycosylase with associated apurinic/apyrimidinic (AP) lyase function that catalyzes the first step in base excision repair (BER), the primary repair pathway for the repair of oxidative DNA damage. The DNA N-glycosylase activity releases the damaged DNA base from DNA by cleaving the N-glycosidic bond, leaving an AP site. The AP lyase activity cleaves the phosphodiester bond 3' to the AP site by a beta-elimination. Primarily recognizes and repairs oxidative base damage of pyrimidines. This Arabidopsis thaliana (Mouse-ear cress) protein is Endonuclease III homolog 2, chloroplastic (NTH2).